The primary structure comprises 405 residues: Chorismate synthase (405 aa).

NADP(+) contacts are provided by arginine 43 and arginine 49. FMN is bound by residues 138–140 (RAS) and 259–260 (QA). Residues 275–286 (RRGSQAHDEMRP) show a composition bias toward basic and acidic residues. Residues 275–308 (RRGSQAHDEMRPGPDGVLRSTNRAGGLEGGMTNG) are disordered. FMN contacts are provided by residues glycine 303, 318 to 322 (KPIST), and arginine 344.

This sequence belongs to the chorismate synthase family. In terms of assembly, homotetramer. It depends on FMNH2 as a cofactor.

The enzyme catalyses 5-O-(1-carboxyvinyl)-3-phosphoshikimate = chorismate + phosphate. It functions in the pathway metabolic intermediate biosynthesis; chorismate biosynthesis; chorismate from D-erythrose 4-phosphate and phosphoenolpyruvate: step 7/7. Its function is as follows. Catalyzes the anti-1,4-elimination of the C-3 phosphate and the C-6 proR hydrogen from 5-enolpyruvylshikimate-3-phosphate (EPSP) to yield chorismate, which is the branch point compound that serves as the starting substrate for the three terminal pathways of aromatic amino acid biosynthesis. This reaction introduces a second double bond into the aromatic ring system. The protein is Chorismate synthase of Nocardia farcinica (strain IFM 10152).